A 485-amino-acid polypeptide reads, in one-letter code: Glutamate--tRNA ligase (485 aa).

A 'HIGH' region motif is present at residues 11-21 (PSPTGLLHIGN). The 'KMSKS' region motif lies at 255–259 (KLSKR). K258 provides a ligand contact to ATP.

This sequence belongs to the class-I aminoacyl-tRNA synthetase family. Glutamate--tRNA ligase type 1 subfamily. Monomer.

It is found in the cytoplasm. It catalyses the reaction tRNA(Glu) + L-glutamate + ATP = L-glutamyl-tRNA(Glu) + AMP + diphosphate. Catalyzes the attachment of glutamate to tRNA(Glu) in a two-step reaction: glutamate is first activated by ATP to form Glu-AMP and then transferred to the acceptor end of tRNA(Glu). The polypeptide is Glutamate--tRNA ligase (Streptococcus gordonii (strain Challis / ATCC 35105 / BCRC 15272 / CH1 / DL1 / V288)).